The following is an 884-amino-acid chain: Alanine--tRNA ligase (884 aa).

Residues His-572, His-576, Cys-673, and His-677 each contribute to the Zn(2+) site.

This sequence belongs to the class-II aminoacyl-tRNA synthetase family. The cofactor is Zn(2+).

Its subcellular location is the cytoplasm. The catalysed reaction is tRNA(Ala) + L-alanine + ATP = L-alanyl-tRNA(Ala) + AMP + diphosphate. Its function is as follows. Catalyzes the attachment of alanine to tRNA(Ala) in a two-step reaction: alanine is first activated by ATP to form Ala-AMP and then transferred to the acceptor end of tRNA(Ala). Also edits incorrectly charged Ser-tRNA(Ala) and Gly-tRNA(Ala) via its editing domain. The sequence is that of Alanine--tRNA ligase from Xylella fastidiosa (strain 9a5c).